A 95-amino-acid polypeptide reads, in one-letter code: uncharacterized protein (95 aa).

The segment covering 1–12 (MQNFMNNLSGGS) has biased composition (low complexity). Residues 1-27 (MQNFMNNLSGGSNKEGGEKSNDFLSSA) are disordered.

This is an uncharacterized protein from Schizosaccharomyces pombe (strain 972 / ATCC 24843) (Fission yeast).